An 88-amino-acid polypeptide reads, in one-letter code: Large ribosomal subunit protein bL27 (88 aa).

The tract at residues 1-21 is disordered; sequence MAHKKGASSSRNGRDSAAQRL.

Belongs to the bacterial ribosomal protein bL27 family.

In Mycobacterium sp. (strain MCS), this protein is Large ribosomal subunit protein bL27.